The primary structure comprises 93 residues: uncharacterized protein (93 aa).

A coiled-coil region spans residues 25–68 (DIKKLSQVKSELEQGKALLEEEKKELIEKNSNLNLQISNMNHLK).

This is an uncharacterized protein from Dictyostelium discoideum (Social amoeba).